The chain runs to 405 residues: BRCA1-A complex subunit Abraxas 1 (405 aa).

In terms of domain architecture, MPN spans 7 to 153; it reads SALLSGFVFG…CSTYRLEHAL (147 aa). The stretch at 208–262 forms a coiled coil; it reads SLQEVHKINEMYATLQEELKKMCSDVEVSERSVEKLLTEVSQLKEEINRKKQHKI. A disordered region spans residues 365–405; that stretch reads LHQDEEDCNQETKLALSSAETDEEALENPKDTNEYSYSPTF. Serine 402 carries the phosphoserine modification. A pSXXF motif motif is present at residues 402–405; that stretch reads SPTF.

It belongs to the FAM175 family. Abraxas subfamily. Component of the BRCA1-A complex. Component of the BRISC complex. Homodimer. Interacts directly (when phosphorylated at Ser-402) with BRCA1. The phosphorylated homodimer can interact directly with two BRCA1 chains, giving rise to a heterotetramer. In terms of processing, phosphorylation of Ser-402 of the pSXXF motif by ATM or ATR constitutes a specific recognition motif for the BRCT domain of BRCA1.

The protein resides in the nucleus. In terms of biological role, involved in DNA damage response and double-strand break (DSB) repair. Component of the BRCA1-A complex, acting as a central scaffold protein that assembles the various components of the complex and mediates the recruitment of BRCA1. The BRCA1-A complex specifically recognizes 'Lys-63'-linked ubiquitinated histones H2A and H2AX at DNA lesion sites, leading to target the BRCA1-BARD1 heterodimer to sites of DNA damage at DSBs. This complex also possesses deubiquitinase activity that specifically removes 'Lys-63'-linked ubiquitin on histones H2A and H2AX. The chain is BRCA1-A complex subunit Abraxas 1 from Gallus gallus (Chicken).